Here is a 111-residue protein sequence, read N- to C-terminus: Putative pterin-4-alpha-carbinolamine dehydratase (111 aa).

This sequence belongs to the pterin-4-alpha-carbinolamine dehydratase family.

The catalysed reaction is (4aS,6R)-4a-hydroxy-L-erythro-5,6,7,8-tetrahydrobiopterin = (6R)-L-erythro-6,7-dihydrobiopterin + H2O. This chain is Putative pterin-4-alpha-carbinolamine dehydratase, found in Marinobacter nauticus (strain ATCC 700491 / DSM 11845 / VT8) (Marinobacter aquaeolei).